The following is a 392-amino-acid chain: Chalcone synthase 1 (392 aa).

Residue cysteine 167 is part of the active site.

This sequence belongs to the thiolase-like superfamily. Chalcone/stilbene synthases family.

It catalyses the reaction (E)-4-coumaroyl-CoA + 3 malonyl-CoA + 3 H(+) = 2',4,4',6'-tetrahydroxychalcone + 3 CO2 + 4 CoA. The protein operates within secondary metabolite biosynthesis; flavonoid biosynthesis. In terms of biological role, the primary product of this enzyme is 4,2',4',6'-tetrahydroxychalcone (also termed naringenin-chalcone or chalcone) which can under specific conditions spontaneously isomerize into naringenin. The sequence is that of Chalcone synthase 1 (CHS1) from Secale cereale (Rye).